A 292-amino-acid polypeptide reads, in one-letter code: 5,10-methylenetetrahydrofolate reductase (292 aa).

The active-site Proton donor/acceptor is the glutamate 26. Residue threonine 57 coordinates NADH. Tyrosine 58, alanine 60, histidine 86, arginine 116, glycine 117, aspartate 118, alanine 130, tyrosine 150, histidine 154, alanine 157, aspartate 163, asparagine 166, arginine 169, and lysine 170 together coordinate FAD. Aspartate 118 lines the (6S)-5-methyl-5,6,7,8-tetrahydrofolate pocket. Glutamine 181 is an NADH binding site. The (6S)-5-methyl-5,6,7,8-tetrahydrofolate site is built by glutamine 181, glutamine 217, and arginine 277.

The protein belongs to the methylenetetrahydrofolate reductase family. The cofactor is FAD.

The enzyme catalyses (6S)-5-methyl-5,6,7,8-tetrahydrofolate + NAD(+) = (6R)-5,10-methylene-5,6,7,8-tetrahydrofolate + NADH + H(+). Its pathway is one-carbon metabolism; tetrahydrofolate interconversion. It participates in amino-acid biosynthesis; L-methionine biosynthesis via de novo pathway. Functionally, catalyzes the NADH-dependent reduction of 5,10-methylenetetrahydrofolate to 5-methyltetrahydrofolate. Is required to provide the methyl group necessary for methionine synthetase to convert homocysteine to methionine; the methyl group is given by 5-methyltetrahydrofolate. This chain is 5,10-methylenetetrahydrofolate reductase (metF), found in Haemophilus influenzae (strain ATCC 51907 / DSM 11121 / KW20 / Rd).